A 126-amino-acid polypeptide reads, in one-letter code: Phosphoribosyl-AMP cyclohydrolase (126 aa).

Position 74 (Asp74) interacts with Mg(2+). Cys75 is a binding site for Zn(2+). Asp76 and Asp78 together coordinate Mg(2+). The Zn(2+) site is built by Cys92 and Cys99.

It belongs to the PRA-CH family. Homodimer. The cofactor is Mg(2+). It depends on Zn(2+) as a cofactor.

It is found in the cytoplasm. The catalysed reaction is 1-(5-phospho-beta-D-ribosyl)-5'-AMP + H2O = 1-(5-phospho-beta-D-ribosyl)-5-[(5-phospho-beta-D-ribosylamino)methylideneamino]imidazole-4-carboxamide. It functions in the pathway amino-acid biosynthesis; L-histidine biosynthesis; L-histidine from 5-phospho-alpha-D-ribose 1-diphosphate: step 3/9. Functionally, catalyzes the hydrolysis of the adenine ring of phosphoribosyl-AMP. This is Phosphoribosyl-AMP cyclohydrolase from Geotalea daltonii (strain DSM 22248 / JCM 15807 / FRC-32) (Geobacter daltonii).